A 72-amino-acid chain; its full sequence is MAREDHIEMEGVVVDTLPNTMFRVELENGHVVTAHISGKMRKNYIRILTGDKVKVELTPYDLSKGRIVYRAR.

Residues 1–72 (MAREDHIEME…SKGRIVYRAR (72 aa)) form the S1-like domain.

The protein belongs to the IF-1 family. In terms of assembly, component of the 30S ribosomal translation pre-initiation complex which assembles on the 30S ribosome in the order IF-2 and IF-3, IF-1 and N-formylmethionyl-tRNA(fMet); mRNA recruitment can occur at any time during PIC assembly.

The protein localises to the cytoplasm. One of the essential components for the initiation of protein synthesis. Stabilizes the binding of IF-2 and IF-3 on the 30S subunit to which N-formylmethionyl-tRNA(fMet) subsequently binds. Helps modulate mRNA selection, yielding the 30S pre-initiation complex (PIC). Upon addition of the 50S ribosomal subunit IF-1, IF-2 and IF-3 are released leaving the mature 70S translation initiation complex. This is Translation initiation factor IF-1 from Chromohalobacter salexigens (strain ATCC BAA-138 / DSM 3043 / CIP 106854 / NCIMB 13768 / 1H11).